The primary structure comprises 722 residues: Metal transporter cnnm-5 (722 aa).

An N-terminal signal peptide occupies residues 1–17 (MSLFLFAIFQLALGSPG). Residues 18-139 (APNGPNVPLQ…AAAAKYMGDE (122 aa)) are Extracellular-facing. N-linked (GlcNAc...) asparagine glycosylation is found at Asn-102 and Asn-114. A CNNM transmembrane domain is found at 132–318 (AAKYMGDEIV…AQNEREKTIL (187 aa)). Residues 140-160 (IVFCFFCILMSAYASGMTLGY) form a helical membrane-spanning segment. The Cytoplasmic portion of the chain corresponds to 161–196 (MKFSMIDLNTMLKIAEGDAAKKRVRRIMHFRRRSTQ). The helical transmembrane segment at 197–217 (LVVTFSLFSSVFTVLFTTTCE) threads the bilayer. The Extracellular segment spans residues 218-227 (KMLHGVSNED). The helical transmembrane segment at 228–248 (VLKMAVPALICLIFAEMIPQA) threads the bilayer. At 249–257 (VCNSKFGFN) the chain is on the cytoplasmic side. Residues 258–278 (LAASLWFVTVIIFFVTLPIAY) traverse the membrane as a helical segment. The Extracellular segment spans residues 279–722 (PASLVLGRFL…ETTPFMEKQE (444 aa)). N-linked (GlcNAc...) asparagine glycosylation is found at Asn-320, Asn-349, and Asn-371. 2 CBS domains span residues 333–396 (MVPI…LIDE) and 413–473 (TVKF…KIDE). The segment at 584–607 (SQRSSSTVNSQQHRQQTTDNSRST) is disordered. Residue Asn-639 is glycosylated (N-linked (GlcNAc...) asparagine). Residues 686–722 (LNSRASTSTSTTPACRTPLSVDARSQDETTPFMEKQE) are disordered. Over residues 688–703 (SRASTSTSTTPACRTP) the composition is skewed to low complexity.

It belongs to the ACDP family.

It localises to the cell membrane. Functionally, probable metal transporter. Probably acts redundantly with the other metal transport proteins cnnm-1, cnnm-2, cnnm-3 and cnnm-4 to regulate Mg(2+) homeostasis. This is Metal transporter cnnm-5 from Caenorhabditis elegans.